Here is a 298-residue protein sequence, read N- to C-terminus: Mitochondrial 2-oxodicarboxylate carrier (298 aa).

Solcar repeat units follow at residues 10–99 (HETS…YKKF), 106–195 (SPGL…VKNI), and 204–293 (LEFL…TYAW). 6 helical membrane-spanning segments follow: residues 16 to 36 (VAAGGSAGLVEICLMHPLDVV), 69 to 88 (FGFYKGIIPPILAETPKRAV), 112 to 132 (LIAGLGSGLTEAVVVNPFEVV), 166 to 186 (GLNKGLTATLGRHGIFNMVYF), 204 to 224 (LEFLRKFGIGFVSGTMGSVFN), and 276 to 296 (LGPGGGVMLLVYEYTYAWLQE).

Belongs to the mitochondrial carrier (TC 2.A.29) family.

Its subcellular location is the mitochondrion inner membrane. It catalyses the reaction 2-oxoadipate(in) + 2-oxoglutarate(out) = 2-oxoadipate(out) + 2-oxoglutarate(in). The catalysed reaction is hexanedioate(in) + 2-oxoglutarate(out) = hexanedioate(out) + 2-oxoglutarate(in). The enzyme catalyses L-2-aminoadipate(in) + 2-oxoglutarate(out) = L-2-aminoadipate(out) + 2-oxoglutarate(in). It carries out the reaction glutarate(in) + 2-oxoglutarate(out) = glutarate(out) + 2-oxoglutarate(in). It catalyses the reaction 2-oxoheptanedioate(in) + 2-oxoglutarate(out) = 2-oxoheptanedioate(out) + 2-oxoglutarate(in). The catalysed reaction is heptanedioate(in) + 2-oxoglutarate(out) = heptanedioate(out) + 2-oxoglutarate(in). The enzyme catalyses citrate(in) + 2-oxoglutarate(out) = citrate(out) + 2-oxoglutarate(in). Its function is as follows. Transports dicarboxylates across the inner membranes of mitochondria by a counter-exchange mechanism. Can transport 2-oxoadipate (2-oxohexanedioate), 2-oxoglutarate, adipate (hexanedioate), glutarate, and to a lesser extent, pimelate (heptanedioate), 2-oxopimelate (2-oxoheptanedioate), 2-aminoadipate (2-aminohexanedioate), oxaloacetate, and citrate. Plays a central role in catabolism of lysine, hydroxylysine, and tryptophan, by transporting common metabolite intermediates (such as 2-oxoadipate) into the mitochondria, where it is converted into acetyl-CoA and can enter the citric acid (TCA) cycle. This Mus musculus (Mouse) protein is Mitochondrial 2-oxodicarboxylate carrier (Slc25a21).